Reading from the N-terminus, the 228-residue chain is Aquaporin Z (228 aa).

The next 2 helical transmembrane spans lie at 1 to 21 and 23 to 43; these read MLNK…GGCG and AILA…ALAF. The NPA 1 signature appears at 63–65; it reads NPA. Transmembrane regions (helical) follow at residues 82–102, 129–149, and 154–174; these read IPYW…LYVI, MMAG…IILG, and LAPA…IHLV. Residues 184-186 carry the NPA 2 motif; it reads NPA. Residues 205–225 form a helical membrane-spanning segment; the sequence is LFWVAPLVGAVIGAIIWKGLL.

Belongs to the MIP/aquaporin (TC 1.A.8) family. Homotetramer.

The protein localises to the cell inner membrane. It catalyses the reaction H2O(in) = H2O(out). Functionally, channel that permits osmotically driven movement of water in both directions. It is involved in the osmoregulation and in the maintenance of cell turgor during volume expansion in rapidly growing cells. It mediates rapid entry or exit of water in response to abrupt changes in osmolarity. This is Aquaporin Z from Brucella melitensis biotype 1 (strain ATCC 23456 / CCUG 17765 / NCTC 10094 / 16M).